A 506-amino-acid chain; its full sequence is Glutamyl-tRNA(Gln) amidotransferase subunit A, mitochondrial (506 aa).

Active-site charge relay system residues include K62 and S141. Residue S165 is the Acyl-ester intermediate of the active site.

Belongs to the amidase family. GatA subfamily. Subunit of the heterotrimeric GatCAB amidotransferase (AdT) complex, composed of A, B and C subunits.

It is found in the mitochondrion. It carries out the reaction L-glutamyl-tRNA(Gln) + L-glutamine + ATP + H2O = L-glutaminyl-tRNA(Gln) + L-glutamate + ADP + phosphate + H(+). Its function is as follows. Allows the formation of correctly charged Gln-tRNA(Gln) through the transamidation of misacylated Glu-tRNA(Gln) in the mitochondria. The reaction takes place in the presence of glutamine and ATP through an activated gamma-phospho-Glu-tRNA(Gln). This chain is Glutamyl-tRNA(Gln) amidotransferase subunit A, mitochondrial, found in Emericella nidulans (strain FGSC A4 / ATCC 38163 / CBS 112.46 / NRRL 194 / M139) (Aspergillus nidulans).